A 155-amino-acid chain; its full sequence is Small ribosomal subunit protein uS7cz/uS7cy (155 aa).

This sequence belongs to the universal ribosomal protein uS7 family. As to quaternary structure, part of the 30S ribosomal subunit.

The protein localises to the plastid. The protein resides in the chloroplast. In terms of biological role, one of the primary rRNA binding proteins, it binds directly to 16S rRNA where it nucleates assembly of the head domain of the 30S subunit. The polypeptide is Small ribosomal subunit protein uS7cz/uS7cy (rps7-A) (Phaseolus vulgaris (Kidney bean)).